The following is a 1710-amino-acid chain: MALGSRWQPPPQLPPLLLLLALAAGVRGLEFGGGPGQWARYARWAGAASTGELSFSLRTNATRALLLYLDDGGDCDFLELLLVDGRLRLRFTLSCAEPATLQLDTPVADDRWHMVLLTRDARRTALAVDGEARAAEVRSKRREMQVASDLFVGGIPPDVRLSALTLSTVKYEPPFRGLLANLKLGERPPALLGSQGLRGAAADPLCAPARNPCANGGLCTVLAPGEVGCDCSHTGFGGKFCSEEEHPMEGPAHLTLNSEVGSLLFSEGGAGRGGAGDVHQPTKGKEEFVATFKGNEFFCYDLSHNPIQSSTDEITLAFRTLQRNGLMLHTGKSADYVNLSLKSGAVWLVINLGSGAFEALVEPVNGKFNDNAWHDVRVTRNLRQHAGIGHAMVNKLHYLVTISVDGILTTTGYTQEDYTMLGSDDFFYIGGSPNTADLPGSPVSNNFMGCLKDVVYKNNDFKLELSRLAKEGDPKMKLQGDLSFRCEDVAALDPVTFESPEAFVALPRWSAKRTGSISLDFRTTEPNGLLLFSQGRRAGAGVGSHSSTQRADYFAMELLDGYLYLLLDMGSGGIKLRASSRKVNDGEWCHVDFQRDGRKGSISVNSRSTPFLATGESEVLDLESELYLGGLPEGGRVDLPLPPEVWTAALRAGYVGCVRDLFIDGRSRDLRGLAEAQGAVGVAPFCSRETLKQCASAPCRNGGICREGWNRFVCDCIGTGFLGRVCEREATVLSYDGSMYMKIMLPTAMHTEAEDVSLRFMSQRAYGLMMATTSRESADTLRLELDGGQMRLTVNLDCLRVGCAPSKGPETLFAGHKLNDNEWHTVRVVRRGKSLQLSVDNVTVEGQMAGAHTRLEFHNIETGIMTERRFISVVPSNFIGHLSGLVFNGQPYMDQCKDGDITYCELNARFGLRAIVADPVTFKSRSSYLALATLQAYASMHLFFQFKTTAPDGLLLFNSGNGNDFIVIELVKGYIHYVFDLGNGPSLMKGNSDKPVNDNQWHNVVVSRDPGNVHTLKIDSRTVTQHSNGARNLDLKGELYIGGLSKNMFSNLPKLVASRDGFQGCLASVDLNGRLPDLIADALHRIGQVERGCDGPSTTCTEESCANQGVCLQQWDGFTCDCTMTSYGGPVCNDPGTTYIFGKGGALITYTWPPNDRPSTRMDRLAVGFSTHQRSAVLVRVDSASGLGDYLQLHIDQGTVGVIFNVGTDDITIDEPNAIVSDGKYHVVRFTRSGGNATLQVDSWPVNERYPAGNFDNERLAIARQRIPYRLGRVVDEWLLDKGRQLTIFNSQAAIKIGGRDQGRPFQGQVSGLYYNGLKVLALAAESDPNVRTEGHLRLVGEGPSVLLSAETTATTLLADMATTIMETTTTMATTTTRRGRSPTMRDSTTQNTDDLLVASAECPSDDEDLEECEPSTGGELILPIITEDSLDPPPVATRSPFVPPPPTFYPFLTGVGATQDTLPPPAARRPSSGGPCQAERDDSDCEEPVEASGFASGEVFDSSLPPTDDEDFYTTFPLVTDRTTLLSPRKPRPNLRTDGATGAPGVLFAPSAPAPNLPAGKMNHRDPLQPLLENPPLGPGVPTAFEPRRPPPLRPGVTSAPGFPRLPTANPTGPGERGPPGAVEVIRESSSTTGMVVGIVAAAALCILILLYAMYKYRNRDEGSYQVDQSRNYISNSAQSNGAVVKEKAPAAPKTPSKAKKNKDKEYYV.

Positions 1–28 (MALGSRWQPPPQLPPLLLLLALAAGVRG) are cleaved as a signal peptide. The Laminin G-like 1 domain maps to 29 to 206 (LEFGGGPGQW…LRGAAADPLC (178 aa)). Over 29–1634 (LEFGGGPGQW…EVIRESSSTT (1606 aa)) the chain is Extracellular. An N-linked (GlcNAc...) asparagine glycan is attached at N60. The 41-residue stretch at 202-242 (ADPLCAPARNPCANGGLCTVLAPGEVGCDCSHTGFGGKFCS) folds into the EGF-like 1 domain. 3 disulfide bridges follow: C206–C219, C213–C229, and C231–C241. Laminin G-like domains are found at residues 289 to 486 (VATF…SFRC) and 493 to 686 (DPVT…APFC). D335 provides a ligand contact to Ca(2+). An N-linked (GlcNAc...) asparagine glycan is attached at N338. Residues L352 and M420 each coordinate Ca(2+). 5 cysteine pairs are disulfide-bonded: C450/C486, C657/C686, C694/C705, C699/C714, and C716/C726. In terms of domain architecture, EGF-like 2 spans 690–727 (TLKQCASAPCRNGGICREGWNRFVCDCIGTGFLGRVCE). Laminin G-like domains follow at residues 732–904 (VLSY…ITYC) and 918–1093 (DPVT…ERGC). D779 and L796 together coordinate Ca(2+). N841 carries an N-linked (GlcNAc...) asparagine glycan. Ca(2+) is bound at residue R854. Cystine bridges form between C1065–C1093, C1100–C1111, C1105–C1120, and C1122–C1132. The EGF-like 3 domain occupies 1096–1133 (PSTTCTEESCANQGVCLQQWDGFTCDCTMTSYGGPVCN). Residues 1137 to 1345 (TTYIFGKGGA…HLRLVGEGPS (209 aa)) enclose the Laminin G-like 6 domain. Ca(2+) contacts are provided by D1189, V1206, I1288, and N1290. S1400 carries O-linked (Xyl...) (heparan sulfate) serine glycosylation. Disordered stretches follow at residues 1458–1508 (ATQD…LPPT) and 1587–1621 (EPRR…RGPP). The chain crosses the membrane as a helical span at residues 1635-1655 (GMVVGIVAAAALCILILLYAM). Topologically, residues 1656 to 1710 (YKYRNRDEGSYQVDQSRNYISNSAQSNGAVVKEKAPAAPKTPSKAKKNKDKEYYV) are cytoplasmic. Residues 1677 to 1710 (NSAQSNGAVVKEKAPAAPKTPSKAKKNKDKEYYV) form a disordered region.

As to quaternary structure, the laminin G-like domain 1 binds to NXPH1. Interacts with PATJ. Interacts with CBLN1, CBLN2 and, less avidly, with CBLN4. Specific isoforms bind neuroligins NLGN1, NLGN2 and NLGN3. Specific isoforms bind to alpha-dystroglycan. Interacts (via Laminin G-like 1 domain) with IGSF21 (Ig-like 1 domain) in a trans-interaction manner. Interacts with CLSTN3. O-glycosylated; contains heparan sulfate. Heparan sulfate attachment is required for synapse development by mediating interactions with neuroligins.

It localises to the presynaptic cell membrane. Its function is as follows. Neuronal cell surface protein that may be involved in cell recognition and cell adhesion. May mediate intracellular signaling. The protein is Neurexin-2 of Mus musculus (Mouse).